Here is a 106-residue protein sequence, read N- to C-terminus: Cuticle protein CP14.6 (106 aa).

An N-terminal signal peptide occupies residues 1–16 (MKSFFVVALLVAAAAA). A Chitin-binding type R&amp;R domain is found at 37 to 106 (PQHYSYSVET…PQGAHLPVAA (70 aa)).

Functionally, component of the cuticle of tobacco hornworm. The chain is Cuticle protein CP14.6 (CP14.6) from Manduca sexta (Tobacco hawkmoth).